Reading from the N-terminus, the 526-residue chain is Probable Xaa-Pro aminopeptidase GLRG_02280 (526 aa).

Asp285, Asp296, Glu454, and Glu495 together coordinate Mn(2+).

The protein belongs to the peptidase M24B family. It depends on Mn(2+) as a cofactor.

It carries out the reaction Release of any N-terminal amino acid, including proline, that is linked to proline, even from a dipeptide or tripeptide.. In terms of biological role, catalyzes the removal of a penultimate prolyl residue from the N-termini of peptides. This is Probable Xaa-Pro aminopeptidase GLRG_02280 from Colletotrichum graminicola (strain M1.001 / M2 / FGSC 10212) (Maize anthracnose fungus).